The primary structure comprises 811 residues: Protein VAC14 homolog (811 aa).

7 HEAT repeats span residues 81–119, 122–160, 240–278, 334–372, 375–412, 431–469, and 472–510; these read DSYMESILLPVLYCFNDSDSKIRYYACESMYNIGKVAKG, FRYFNLIFDVLCKLFADTEITVKNGAELLDRLIKDIVMQ, ISYLPFLLDGLMNYLSDPNESIRIVTSNCLYDFLREIQK, QIDYKRILEIIIDHLGSSVPLIQEKALKWLFEFIYIAPK, LLQIPKVLENLLPLMSNDENMRQSAKDLSQNLVILVSK, SVDFRSLIEVLQKLLSNDNEETRLCALEWVLLLQRRTGG, and INMHDPIFQTLLLQLSDPSDLVVSRTLELLAHIAISHKS. The segment covering 775 to 785 has biased composition (low complexity); that stretch reads TSASGITTTAS. Positions 775–811 are disordered; the sequence is TSASGITTTASNSRDSFITRLPPTAALSTGARKKPKQ.

This sequence belongs to the VAC14 family. As to quaternary structure, component of the PI(3,5)P2 regulatory complex, composed of ATG18, FIG4, FAB1, VAC14 and VAC7. VAC14 nucleates the assembly of the complex and serves as a scaffold.

It is found in the cytoplasm. The protein resides in the vacuole membrane. In terms of biological role, the PI(3,5)P2 regulatory complex regulates both the synthesis and turnover of phosphatidylinositol 3,5-bisphosphate (PtdIns(3,5)P2). Regulates the synthesis of PtdIns(3,5)P2 by positive activation of FAB1 and by controlling FIG4 localization. This chain is Protein VAC14 homolog, found in Schizosaccharomyces pombe (strain 972 / ATCC 24843) (Fission yeast).